A 75-amino-acid chain; its full sequence is ATP synthase subunit c (75 aa).

A run of 2 helical transmembrane segments spans residues 9–29 (IGAG…GIIF) and 54–74 (FALA…ILFA).

The protein belongs to the ATPase C chain family. F-type ATPases have 2 components, F(1) - the catalytic core - and F(0) - the membrane proton channel. F(1) has five subunits: alpha(3), beta(3), gamma(1), delta(1), epsilon(1). F(0) has three main subunits: a(1), b(2) and c(10-14). The alpha and beta chains form an alternating ring which encloses part of the gamma chain. F(1) is attached to F(0) by a central stalk formed by the gamma and epsilon chains, while a peripheral stalk is formed by the delta and b chains.

Its subcellular location is the cell inner membrane. Its function is as follows. F(1)F(0) ATP synthase produces ATP from ADP in the presence of a proton or sodium gradient. F-type ATPases consist of two structural domains, F(1) containing the extramembraneous catalytic core and F(0) containing the membrane proton channel, linked together by a central stalk and a peripheral stalk. During catalysis, ATP synthesis in the catalytic domain of F(1) is coupled via a rotary mechanism of the central stalk subunits to proton translocation. Key component of the F(0) channel; it plays a direct role in translocation across the membrane. A homomeric c-ring of between 10-14 subunits forms the central stalk rotor element with the F(1) delta and epsilon subunits. This Pelagibacter ubique (strain HTCC1062) protein is ATP synthase subunit c.